The primary structure comprises 436 residues: Tol-Pal system protein TolB (436 aa).

An N-terminal signal peptide occupies residues 1 to 19 (MVKCSLIRALMVVAGLVGA).

This sequence belongs to the TolB family. As to quaternary structure, the Tol-Pal system is composed of five core proteins: the inner membrane proteins TolA, TolQ and TolR, the periplasmic protein TolB and the outer membrane protein Pal. They form a network linking the inner and outer membranes and the peptidoglycan layer.

Its subcellular location is the periplasm. Functionally, part of the Tol-Pal system, which plays a role in outer membrane invagination during cell division and is important for maintaining outer membrane integrity. The chain is Tol-Pal system protein TolB from Rhizobium etli (strain ATCC 51251 / DSM 11541 / JCM 21823 / NBRC 15573 / CFN 42).